Consider the following 466-residue polypeptide: Glutamate--tRNA ligase (466 aa).

The 'HIGH' region motif lies at 11–21 (PSPTGFIHLGN). Residues 243–247 (KMSKR) carry the 'KMSKS' region motif. Lys246 contacts ATP.

It belongs to the class-I aminoacyl-tRNA synthetase family. Glutamate--tRNA ligase type 1 subfamily. In terms of assembly, monomer.

It is found in the cytoplasm. It catalyses the reaction tRNA(Glu) + L-glutamate + ATP = L-glutamyl-tRNA(Glu) + AMP + diphosphate. In terms of biological role, catalyzes the attachment of glutamate to tRNA(Glu) in a two-step reaction: glutamate is first activated by ATP to form Glu-AMP and then transferred to the acceptor end of tRNA(Glu). This Cupriavidus necator (strain ATCC 17699 / DSM 428 / KCTC 22496 / NCIMB 10442 / H16 / Stanier 337) (Ralstonia eutropha) protein is Glutamate--tRNA ligase.